A 99-amino-acid chain; its full sequence is UPF0235 protein Sbal_3028 (99 aa).

This sequence belongs to the UPF0235 family.

The protein is UPF0235 protein Sbal_3028 of Shewanella baltica (strain OS155 / ATCC BAA-1091).